Reading from the N-terminus, the 382-residue chain is Alkanesulfonate monooxygenase (382 aa).

The protein belongs to the SsuD family. Homotetramer.

It catalyses the reaction an alkanesulfonate + FMNH2 + O2 = an aldehyde + FMN + sulfite + H2O + 2 H(+). In terms of biological role, catalyzes the desulfonation of aliphatic sulfonates. The protein is Alkanesulfonate monooxygenase of Buttiauxella sp. (strain PNBS).